Here is a 98-residue protein sequence, read N- to C-terminus: Integration host factor subunit alpha (98 aa).

The tract at residues 54–74 (LRDKASRPGRNPKTGENIPVS) is disordered.

The protein belongs to the bacterial histone-like protein family. In terms of assembly, heterodimer of an alpha and a beta chain.

Functionally, this protein is one of the two subunits of integration host factor, a specific DNA-binding protein that functions in genetic recombination as well as in transcriptional and translational control. The polypeptide is Integration host factor subunit alpha (Actinobacillus succinogenes (strain ATCC 55618 / DSM 22257 / CCUG 43843 / 130Z)).